The chain runs to 188 residues: Elongation factor P (188 aa).

It belongs to the elongation factor P family.

The protein resides in the cytoplasm. Its pathway is protein biosynthesis; polypeptide chain elongation. Functionally, involved in peptide bond synthesis. Stimulates efficient translation and peptide-bond synthesis on native or reconstituted 70S ribosomes in vitro. Probably functions indirectly by altering the affinity of the ribosome for aminoacyl-tRNA, thus increasing their reactivity as acceptors for peptidyl transferase. This chain is Elongation factor P, found in Rhodopseudomonas palustris (strain BisB5).